We begin with the raw amino-acid sequence, 93 residues long: Small ribosomal subunit protein uS19 (93 aa).

It belongs to the universal ribosomal protein uS19 family.

Its function is as follows. Protein S19 forms a complex with S13 that binds strongly to the 16S ribosomal RNA. This is Small ribosomal subunit protein uS19 from Lacticaseibacillus paracasei (strain ATCC 334 / BCRC 17002 / CCUG 31169 / CIP 107868 / KCTC 3260 / NRRL B-441) (Lactobacillus paracasei).